Consider the following 429-residue polypeptide: D-amino acid dehydrogenase (429 aa).

3–17 provides a ligand contact to FAD; that stretch reads VLILGSGVIGVTSAW.

This sequence belongs to the DadA oxidoreductase family. The cofactor is FAD.

The enzyme catalyses a D-alpha-amino acid + A + H2O = a 2-oxocarboxylate + AH2 + NH4(+). Its pathway is amino-acid degradation; D-alanine degradation; NH(3) and pyruvate from D-alanine: step 1/1. Its function is as follows. Oxidative deamination of D-amino acids. The polypeptide is D-amino acid dehydrogenase (Xanthomonas euvesicatoria pv. vesicatoria (strain 85-10) (Xanthomonas campestris pv. vesicatoria)).